The following is a 320-amino-acid chain: Cytochrome c1-1, heme protein, mitochondrial (320 aa).

Residues 1-77 (MSLGKKIRIG…LLSFATIAYS (77 aa)) constitute a mitochondrion transit peptide. Residues 78 to 280 (DEAEHGLECP…WAAEPEMEER (203 aa)) are Mitochondrial intermembrane-facing. Residues 103-210 (ASIRRGHQVY…NGQNYVFALL (108 aa)) enclose the Cytochrome c domain. Cysteine 116, cysteine 119, histidine 120, and methionine 239 together coordinate heme c. Residues 281 to 301 (KLMGFKWIFVLSLALLQAAYY) traverse the membrane as a helical segment. The Mitochondrial matrix segment spans residues 302–320 (RRLRWSVLKSRKLVLDVVN).

The protein belongs to the cytochrome c family. Component of the ubiquinol-cytochrome c oxidoreductase (cytochrome b-c1 complex, complex III, CIII), a multisubunit enzyme composed of 3 respiratory subunits cytochrome b, cytochrome c1 and Rieske protein, 2 core protein subunits, and additional low-molecular weight protein subunits. The complex exists as an obligatory dimer and forms supercomplexes (SCs) in the inner mitochondrial membrane with cytochrome c oxidase (complex IV, CIV). Heme c serves as cofactor. In all tissues analyzed.

The protein localises to the mitochondrion inner membrane. It catalyses the reaction a quinol + 2 Fe(III)-[cytochrome c](out) = a quinone + 2 Fe(II)-[cytochrome c](out) + 2 H(+)(out). In terms of biological role, component of the ubiquinol-cytochrome c oxidoreductase, a multisubunit transmembrane complex that is part of the mitochondrial electron transport chain which drives oxidative phosphorylation. The respiratory chain contains 3 multisubunit complexes succinate dehydrogenase (complex II, CII), ubiquinol-cytochrome c oxidoreductase (cytochrome b-c1 complex, complex III, CIII) and cytochrome c oxidase (complex IV, CIV), that cooperate to transfer electrons derived from NADH and succinate to molecular oxygen, creating an electrochemical gradient over the inner membrane that drives transmembrane transport and the ATP synthase. The cytochrome b-c1 complex catalyzes electron transfer from ubiquinol to cytochrome c, linking this redox reaction to translocation of protons across the mitochondrial inner membrane, with protons being carried across the membrane as hydrogens on the quinol. In the process called Q cycle, 2 protons are consumed from the matrix, 4 protons are released into the intermembrane space and 2 electrons are passed to cytochrome c. Cytochrome c1 is a catalytic core subunit containing a c-type heme. It transfers electrons from the [2Fe-2S] iron-sulfur cluster of the Rieske protein to cytochrome c. This chain is Cytochrome c1-1, heme protein, mitochondrial (CYCL), found in Solanum tuberosum (Potato).